The following is a 134-amino-acid chain: Ribosome-binding factor A (134 aa).

It belongs to the RbfA family. In terms of assembly, monomer. Binds 30S ribosomal subunits, but not 50S ribosomal subunits or 70S ribosomes.

The protein localises to the cytoplasm. Its function is as follows. One of several proteins that assist in the late maturation steps of the functional core of the 30S ribosomal subunit. Associates with free 30S ribosomal subunits (but not with 30S subunits that are part of 70S ribosomes or polysomes). Required for efficient processing of 16S rRNA. May interact with the 5'-terminal helix region of 16S rRNA. In Psychrobacter cryohalolentis (strain ATCC BAA-1226 / DSM 17306 / VKM B-2378 / K5), this protein is Ribosome-binding factor A.